We begin with the raw amino-acid sequence, 292 residues long: 4-hydroxy-tetrahydrodipicolinate synthase (292 aa).

Threonine 45 contacts pyruvate. The active-site Proton donor/acceptor is tyrosine 133. The Schiff-base intermediate with substrate role is filled by lysine 161. Isoleucine 203 contributes to the pyruvate binding site.

Belongs to the DapA family. As to quaternary structure, homotetramer; dimer of dimers.

The protein localises to the cytoplasm. The catalysed reaction is L-aspartate 4-semialdehyde + pyruvate = (2S,4S)-4-hydroxy-2,3,4,5-tetrahydrodipicolinate + H2O + H(+). Its pathway is amino-acid biosynthesis; L-lysine biosynthesis via DAP pathway; (S)-tetrahydrodipicolinate from L-aspartate: step 3/4. Functionally, catalyzes the condensation of (S)-aspartate-beta-semialdehyde [(S)-ASA] and pyruvate to 4-hydroxy-tetrahydrodipicolinate (HTPA). This chain is 4-hydroxy-tetrahydrodipicolinate synthase, found in Azoarcus sp. (strain BH72).